We begin with the raw amino-acid sequence, 1450 residues long: MAHMVGADDIESLRVELAEIGRSIRSSFRRHTSSFRSSSSIYEVENDGDVNDHDAEYALQWAEIERLPTVKRMRSTLLDDGDESMTEKGRRVVDVTKLGAVERHLMIEKLIKHIENDNLKLLKKIRRRIDRVGMELPTIEVRYESLKVVAECEVVEGKALPTLWNTAKRVLSELVKLTGAKTHEAKINIINDVNGIIKPGRLTLLLGPPSCGKTTLLKALSGNLENNLKCSGEISYNGHRLDEFVPQKTSAYISQYDLHIAEMTVRETVDFSARCQGVGSRTDIMMEVSKREKEKGIIPDTEVDAYMKAISVEGLQRSLQTDYILKILGLDICAEILIGDVMRRGISGGQKKRLTTAEMIVGPTKALFMDEITNGLDSSTAFQIVKSLQQFAHISSATVLVSLLQPAPESYDLFDDIMLMAKGRIVYHGPRGEVLNFFEDCGFRCPERKGVADFLQEVISKKDQAQYWWHEDLPYSFVSVEMLSKKFKDLSIGKKIEDTLSKPYDRSKSHKDALSFSVYSLPNWELFIACISREYLLMKRNYFVYIFKTAQLVMAAFITMTVFIRTRMGIDIIHGNSYMSALFFALIILLVDGFPELSMTAQRLAVFYKQKQLCFYPAWAYAIPATVLKVPLSFFESLVWTCLSYYVIGYTPEASRFFKQFILLFAVHFTSISMFRCLAAIFQTVVASITAGSFGILFTFVFAGFVIPPPSMPAWLKWGFWANPLSYGEIGLSVNEFLAPRWNQMQPNNFTLGRTILQTRGMDYNGYMYWVSLCALLGFTVLFNIIFTLALTFLKSPTSSRAMISQDKLSELQGTEKSTEDSSVRKKTTDSPVKTEEEDKMVLPFKPLTVTFQDLNYFVDMPVEMRDQGYDQKKLQLLSDITGAFRPGILTALMGVSGAGKTTLLDVLAGRKTSGYIEGDIRISGFPKVQETFARVSGYCEQTDIHSPNITVEESVIYSAWLRLAPEIDATTKTKFVKQVLETIELDEIKDSLVGVTGVSGLSTEQRKRLTIAVELVANPSIIFMDEPTTGLDARAAAIVMRAVKNVADTGRTIVCTIHQPSIDIFEAFDELVLLKRGGRMIYTGPLGQHSRHIIEYFESVPEIPKIKDNHNPATWMLDVSSQSVEIELGVDFAKIYHDSALYKRNSELVKQLSQPDSGSSDIQFKRTFAQSWWGQFKSILWKMNLSYWRSPSYNLMRMMHTLVSSLIFGALFWKQGQNLDTQQSMFTVFGAIYGLVLFLGINNCASALQYFETERNVMYRERFAGMYSATAYALGQVVTEIPYIFIQAAEFVIVTYPMIGFYPSAYKVFWSLYSMFCSLLTFNYLAMFLVSITPNFMVAAILQSLFYVGFNLFSGFLIPQTQVPGWWIWLYYLTPTSWTLNGFISSQYGDIHEEINVFGQSTTVARFLKDYFGFHHDLLAVTAVVQIAFPIALASMFAFFVGKLNFQRR.

The region spanning 175 to 447 (VKLTGAKTHE…FEDCGFRCPE (273 aa)) is the ABC transporter 1 domain. 207-214 (GPPSCGKT) contacts ATP. The region spanning 525 to 737 (ELFIACISRE…GEIGLSVNEF (213 aa)) is the ABC transmembrane type-2 1 domain. A run of 6 helical transmembrane segments spans residues 544–564 (VYIFKTAQLVMAAFITMTVFI), 581–601 (ALFFALIILLVDGFPELSMTA), 615–635 (FYPAWAYAIPATVLKVPLSFF), 661–681 (FILLFAVHFTSISMFRCLAAI), 687–707 (ASITAGSFGILFTFVFAGFVI), and 773–793 (LCALLGFTVLFNIIFTLALTF). The interval 810–838 (SELQGTEKSTEDSSVRKKTTDSPVKTEEE) is disordered. The segment covering 817-838 (KSTEDSSVRKKTTDSPVKTEEE) has biased composition (basic and acidic residues). The 254-residue stretch at 850–1103 (VTFQDLNYFV…IIEYFESVPE (254 aa)) folds into the ABC transporter 2 domain. An ATP-binding site is contributed by 895–902 (GVSGAGKT). An ABC transmembrane type-2 2 domain is found at 1175–1389 (GQFKSILWKM…TLNGFISSQY (215 aa)). The next 7 helical transmembrane spans lie at 1194–1214 (YNLMRMMHTLVSSLIFGALFW), 1226–1246 (MFTVFGAIYGLVLFLGINNCA), 1282–1302 (IPYIFIQAAEFVIVTYPMIGF), 1313–1333 (LYSMFCSLLTFNYLAMFLVSI), 1339–1359 (VAAILQSLFYVGFNLFSGFLI), 1365–1385 (PGWWIWLYYLTPTSWTLNGFI), and 1422–1442 (VTAVVQIAFPIALASMFAFFV).

The protein belongs to the ABC transporter superfamily. ABCG family. PDR (TC 3.A.1.205) subfamily. Expressed in roots and, to a lower extent, in seedlings.

It is found in the cell membrane. Its function is as follows. Together with ABCG36, regulates auxin homeostasis and responses by playing a dual role in coumarin (and derivatives) and in the auxin precursor indole 3-butyric acid (IBA) efflux transport, thus influencing roots and root hairs development. Mediates coumarin exudation in the rhizosphere, especially in iron (Fe) deficient conditions, with a strong specificity for highly oxygenated compounds such as scopoletin and derivatives, dihydroxyscopoletin, esculetin, fraxin, fraxetin and esculin; these molecules improve plant Fe nutrition. Involved in the cellular detoxification of xenobiotics by promoting the excretion of some auxinic herbicides including 2,4-dichlorophenoxyacetic acid (2,4-D), 4-(2,4-dichlorophenoxy)butyric acid (2,4-DB) and other members of the phenoxyalkanoic acid family as well as the polar auxin transport inhibitor, napthylphthalamic acid (NPA). May be a general defense protein. This Arabidopsis thaliana (Mouse-ear cress) protein is ABC transporter G family member 37.